The chain runs to 350 residues: Phosphate acyltransferase (350 aa).

This sequence belongs to the PlsX family. Homodimer. Probably interacts with PlsY.

It is found in the cytoplasm. It carries out the reaction a fatty acyl-[ACP] + phosphate = an acyl phosphate + holo-[ACP]. It participates in lipid metabolism; phospholipid metabolism. Functionally, catalyzes the reversible formation of acyl-phosphate (acyl-PO(4)) from acyl-[acyl-carrier-protein] (acyl-ACP). This enzyme utilizes acyl-ACP as fatty acyl donor, but not acyl-CoA. In Magnetococcus marinus (strain ATCC BAA-1437 / JCM 17883 / MC-1), this protein is Phosphate acyltransferase.